Reading from the N-terminus, the 119-residue chain is Large ribosomal subunit protein bL20 (119 aa).

The protein belongs to the bacterial ribosomal protein bL20 family.

Functionally, binds directly to 23S ribosomal RNA and is necessary for the in vitro assembly process of the 50S ribosomal subunit. It is not involved in the protein synthesizing functions of that subunit. The chain is Large ribosomal subunit protein bL20 from Xylella fastidiosa (strain M12).